The following is a 118-amino-acid chain: Large ribosomal subunit protein bL19 (118 aa).

The protein belongs to the bacterial ribosomal protein bL19 family.

In terms of biological role, this protein is located at the 30S-50S ribosomal subunit interface and may play a role in the structure and function of the aminoacyl-tRNA binding site. The polypeptide is Large ribosomal subunit protein bL19 (Aliarcobacter butzleri (strain RM4018) (Arcobacter butzleri)).